The following is a 209-amino-acid chain: Thymidylate kinase (209 aa).

10-17 (GLEGAGKS) contributes to the ATP binding site.

This sequence belongs to the thymidylate kinase family.

It carries out the reaction dTMP + ATP = dTDP + ADP. Functionally, phosphorylation of dTMP to form dTDP in both de novo and salvage pathways of dTTP synthesis. The sequence is that of Thymidylate kinase from Photobacterium profundum (strain SS9).